Here is a 269-residue protein sequence, read N- to C-terminus: Holocytochrome-c synthase (269 aa).

The tract at residues 1–72 is disordered; the sequence is MGWFWADQKT…ASKQPGQKMD (72 aa). HRM repeat units follow at residues 25-30 and 41-46; these read GCPVMH and ECPVMQ.

The protein belongs to the cytochrome c-type heme lyase family.

The protein localises to the mitochondrion inner membrane. It is found in the mitochondrion intermembrane space. The catalysed reaction is holo-[cytochrome c] = apo-[cytochrome c] + heme b. Its function is as follows. Lyase that catalyzes the covalent linking of the heme group to the cytochrome C apoprotein to produce the mature functional cytochrome. The polypeptide is Holocytochrome-c synthase (CYC3) (Saccharomyces cerevisiae (strain ATCC 204508 / S288c) (Baker's yeast)).